Consider the following 1241-residue polypeptide: ATP-dependent helicase/nuclease subunit A (1241 aa).

A UvrD-like helicase ATP-binding domain is found at 12-485 (SQWTDDQWKA…IDLAKNFRSR (474 aa)). 33–40 (AAAGSGKT) is an ATP binding site. The UvrD-like helicase C-terminal domain occupies 505 to 805 (GEIDYDADAE…RIMTIHKSKG (301 aa)).

The protein belongs to the helicase family. AddA subfamily. As to quaternary structure, heterodimer of AddA and AddB/RexB. It depends on Mg(2+) as a cofactor.

It catalyses the reaction Couples ATP hydrolysis with the unwinding of duplex DNA by translocating in the 3'-5' direction.. The enzyme catalyses ATP + H2O = ADP + phosphate + H(+). In terms of biological role, the heterodimer acts as both an ATP-dependent DNA helicase and an ATP-dependent, dual-direction single-stranded exonuclease. Recognizes the chi site generating a DNA molecule suitable for the initiation of homologous recombination. The AddA nuclease domain is required for chi fragment generation; this subunit has the helicase and 3' -&gt; 5' nuclease activities. The polypeptide is ATP-dependent helicase/nuclease subunit A (Bacillus mycoides (strain KBAB4) (Bacillus weihenstephanensis)).